A 153-amino-acid chain; its full sequence is Probable histone H2A.2 (153 aa).

2 disordered regions span residues 1-24 (MDASTKTKKGAGGRKGGGPRKKSV) and 127-153 (KKTERSNTVSKEPKSPKPKAGKSPKKA). Basic and acidic residues predominate over residues 127 to 141 (KKTERSNTVSKEPKS). The segment covering 142–153 (PKPKAGKSPKKA) has biased composition (basic residues). Residues 149 to 152 (SPKK) carry the SPKK motif motif.

The protein belongs to the histone H2A family. As to quaternary structure, the nucleosome is a histone octamer containing two molecules each of H2A, H2B, H3 and H4 assembled in one H3-H4 heterotetramer and two H2A-H2B heterodimers. The octamer wraps approximately 147 bp of DNA.

It is found in the nucleus. The protein resides in the chromosome. Its function is as follows. Core component of nucleosome. Nucleosomes wrap and compact DNA into chromatin, limiting DNA accessibility to the cellular machineries which require DNA as a template. Histones thereby play a central role in transcription regulation, DNA repair, DNA replication and chromosomal stability. DNA accessibility is regulated via a complex set of post-translational modifications of histones, also called histone code, and nucleosome remodeling. This Medicago truncatula (Barrel medic) protein is Probable histone H2A.2.